The primary structure comprises 358 residues: DNA replication and repair protein RecF (358 aa).

30 to 37 contacts ATP; that stretch reads GANGSGKT.

This sequence belongs to the RecF family.

The protein localises to the cytoplasm. Its function is as follows. The RecF protein is involved in DNA metabolism; it is required for DNA replication and normal SOS inducibility. RecF binds preferentially to single-stranded, linear DNA. It also seems to bind ATP. The chain is DNA replication and repair protein RecF from Edwardsiella ictaluri (strain 93-146).